A 552-amino-acid chain; its full sequence is Harmonin (552 aa).

Residues 1-86 (MDRKVAREFR…LTPRRSRKLK (86 aa)) form an N-terminal domain region. 2 PDZ domains span residues 87–169 (EVRL…HIGL) and 211–293 (KVFI…AAAG). A mediates interaction with MYO7B region spans residues 194–552 (GVRGSLGSPG…KEYDDELTFF (359 aa)). A Phosphoserine modification is found at Ser-219. The stretch at 310-377 (RELQRQELLM…EKFKKQWEED (68 aa)) forms a coiled coil. The interval 401 to 427 (KPKYDQGVEPELEPADDLDGGTEEQGE) is disordered. Residues 408 to 427 (VEPELEPADDLDGGTEEQGE) show a composition bias toward acidic residues. A PDZ 3 domain is found at 452–537 (DVRLLRIKKE…QGGDWIDLVV (86 aa)).

In terms of assembly, part of the IMAC/intermicrovillar adhesion complex/intermicrovillar tip-link complex composed of ANKS4B, MYO7B, USH1C, CDHR2 and CDHR5. Part of a complex composed of USH1C, USH1G and MYO7A. Interacts with F-actin. Interacts with USH2A. Interacts with SLC4A7. Interacts (via PDZ1 domain) with the C-terminus of USHBP1. Interacts (via N-terminus and PDZ 2 domain) with CDH23. Interacts with USH1G. Interacts with MYO7B. Interacts with CDHR2 and CDHR5; may mediate their interaction with MYO7B at the microvilli tip. Interacts (via PDZ 1 domain) with ANKS4B. Interacts (via PDZ 1 domain) with DOCK4. Expressed in small intestine, colon, kidney, eye and weakly in pancreas. Expressed also in vestibule of the inner ear.

The protein resides in the cytoplasm. It is found in the cytosol. It localises to the cytoskeleton. Its subcellular location is the cell projection. The protein localises to the microvillus. Functionally, anchoring/scaffolding protein that is a part of the functional network formed by USH1C, USH1G, CDH23 and MYO7A that mediates mechanotransduction in cochlear hair cells. Required for normal development and maintenance of cochlear hair cell bundles. As part of the intermicrovillar adhesion complex/IMAC plays a role in brush border differentiation, controlling microvilli organization and length. Probably plays a central regulatory role in the assembly of the complex, recruiting CDHR2, CDHR5 and MYO7B to the microvilli tips. The sequence is that of Harmonin (USH1C) from Homo sapiens (Human).